The following is a 209-amino-acid chain: Claudin-like protein ZF-A9 (209 aa).

4 consecutive transmembrane segments (helical) span residues 8-28 (LGTT…AIPL), 81-101 (AILV…FAGG), 114-134 (ALVA…GLVP), and 159-179 (FGAA…GGGL). The disordered stretch occupies residues 187–209 (GRTSSRGRYTPASQNGRERSEYV). Residues 188-201 (RTSSRGRYTPASQN) are compositionally biased toward polar residues.

This sequence belongs to the claudin family.

It localises to the cell membrane. Its subcellular location is the cell junction. The protein localises to the tight junction. Functionally, component of tight junction (TJ) strands. The polypeptide is Claudin-like protein ZF-A9 (cldng) (Danio rerio (Zebrafish)).